The primary structure comprises 444 residues: Homocysteine/cysteine synthase (444 aa).

S44 is modified (phosphoserine). Residue K160 forms a Glycyl lysine isopeptide (Lys-Gly) (interchain with G-Cter in ubiquitin) linkage. K209 carries the N6-(pyridoxal phosphate)lysine modification.

It belongs to the trans-sulfuration enzymes family. Homotetramer. Pyridoxal 5'-phosphate is required as a cofactor.

Its subcellular location is the cytoplasm. It catalyses the reaction O-acetyl-L-homoserine + methanethiol = L-methionine + acetate + H(+). The enzyme catalyses O-acetyl-L-homoserine + hydrogen sulfide = L-homocysteine + acetate. It carries out the reaction O-acetyl-L-serine + hydrogen sulfide = L-cysteine + acetate. Its pathway is amino-acid biosynthesis; L-methionine biosynthesis via de novo pathway; L-homocysteine from O-acetyl-L-homoserine. In terms of biological role, catalyzes the conversion of O-acetyl-L-homoserine (OAH) into homocysteine in the methionine biosynthesis pathway. Required to efficiently reduce toxic levels of hydrogen sulfide generated when the sulfate assimilation pathway (SAP) is active. Also catalyzes the conversion of O-acetylserine (OAS) into cysteine, the last step in the cysteine biosynthesis pathway. However, it seems that in S.cerevisiae cysteine biosynthesis occurs exclusively through the cystathionine pathway and not via direct incorporation of sulfur into OAS. It therefore has no metabolic role in cysteine biosynthesis and may only have a regulatory role controlling OAS levels. The chain is Homocysteine/cysteine synthase from Saccharomyces cerevisiae (strain ATCC 204508 / S288c) (Baker's yeast).